Consider the following 122-residue polypeptide: Conotoxin flf14c (122 aa).

A signal peptide spans 1–22; the sequence is MGFRVLVLIVMVTTSALPFTFS. A propeptide spanning residues 23 to 96 is cleaved from the precursor; sequence EESGRSPFRP…AESPVGQKRW (74 aa). The disordered stretch occupies residues 53-89; that stretch reads RADGQTPDMHQPEMRRPEMRRPEVRRPEVRQPEFAES. Over residues 62-85 the composition is skewed to basic and acidic residues; that stretch reads HQPEMRRPEMRRPEVRRPEVRQPE. Disulfide bonds link C101–C121 and C105–C117.

Expressed by the venom duct.

The protein resides in the secreted. The polypeptide is Conotoxin flf14c (Conus anabathrum floridanus (Florida cone)).